Here is a 1657-residue protein sequence, read N- to C-terminus: MRLNSQIVFCIVVVISCLSMIECKMGSRIYCSGSLSSVELFSQYISNYALRNDDVTIIYAGMSVDEINADVYIADCSAYDRAIPQIYMISYGLIQFPIVGQAIVIIYNVPGLSSHNMIIDRETLGRIWTGNIRKWNDIQIQNLNPDIASQLPNETITLGYNDAYYLSISEIMQLALRNFSEEFANAHTIAGGKFGNMIPAKQGYAIDAGEASESRIDWVKNTPFSLSFADFATVYPRNVSYMHMYNKAGKLVEPNITTVQSAMADFKEIYTTNDFTIDIFDASGENSWPISWVNYISMTSTFQQADCIRTKELLDFIAWFYMNNEIAEIIKEYQYYPLDNTIKKIAIDNMYNVTCNGKVSQEHQYLIAFGSPLSIMASWPNTWASSMTTVKYYASLSDQAIELQKTFSGDFGITIKDFDKNKYLSSTMEDIGVSHLAAFNIVPAYNIPEFIGLNETLVLNYETIVDIYLGLVTNWNDSSIRNSNNPYINSLLPNKTITVVVQKVESDVNELFTNFLSCKSDKFNNAIGPTNLPEFDFVSNNVVYTEDVYGVGNTLVSTDYSFAFWPEPGIRLLSHMAIVQAASIQTSTGTIIKPTNETLSKAVDNKINSINRRDIEDGSWPFIAMMSLVYHQKTMQSFSKASALADFIYWTQFDDTAASIADTQGYYVASIHPTILRENLELLQSFTFEDRTVSKVANCIFEGTICYNKGTCNNNVCLCNIDREGQFCELEKTQSDTNIVTIILAVVIPIAFIIVCIICILVVALIFSLRFRKGISDDWEIDFHELELGEQLGTGAFGEVHKGTWRGTEVAVKMISPDKTITKDIERNFKDEVRVMTTLRHPNVVLFMAASTKPPKMCIVMEFMALGSLHDLLKNELIPDIPFALKVKIAYQASKGMHFLHSSGITHRDLKSLNLLLDIKWNVKVSDFGLTKFKSDVKSINPEKFAGTIQWTAPEILSEDREVDYILSDVYSFGIIMWELITRDQPYFGMSPAAIAVSVIRDNYRPVISDQLRSEVAPEYIELLTSCWHFDPTIRPTFLEIMTRLSNLMGDSGMTGMSSSSSNSSKFDYNSFGKVQQFAINRTDPDGIVQNSYNRTDSYDLGSNNSHSSITSDTNKSNKYLRQTNIQHPTGEVVVVFTDIISAAQLWEFDASEMKNATILYNKLVRSICNECGGYESLISKERNSGEGSFCLIFSDVQNAITFCEELQKQLVGVNWSPKLLEHPITAIEKDINGTIIYAGLRVRIGLHFGSTKINYDPISRKYEYIGPTVTTAAAVTTITHGGQIIMTEDVANKLSTENSNKPVCLGRVDIDGIPDSLVLYEYVISALIGRFFGGVTRKNASFVSNETSTDYDDMDTDNSTFSARVPHQAYQYHAAIENNERYLTSAGLCSWVINYDEIKMGEQIGLGSYGVVYRGKWKNVDVAIKKFIKQKIDENHLLGIREEIAFLKKLHHPNIITMVGASLKKPNICIVTEYMAKGNLRDAMRTCTPKLEWHQKIKILVNIAKGISYLHSFDPPIIHRDIKPSNILIDENWNVKIADFGFARIKEENAIMTRCGTPCWTAPEIIRNDIYDEKVDVFSFGIVMWEVLTCKEPFIGANFMKITMDILEDVRPKIPQDCPEEFAKLMRKCWHAKSTKRPTMDDVIIVLAKFCPDISV.

Residues 1-23 (MRLNSQIVFCIVVVISCLSMIEC) form the signal peptide. N-linked (GlcNAc...) asparagine; by host glycans are attached at residues N153, N178, N238, N255, N352, N454, N476, N494, and N596. A helical membrane pass occupies residues 742 to 762 (IILAVVIPIAFIIVCIICILV). A Protein kinase 1 domain is found at 786-1049 (LELGEQLGTG…EIMTRLSNLM (264 aa)). ATP contacts are provided by residues 792 to 800 (LGTGAFGEV) and K813. D909 acts as the Proton acceptor in catalysis. Residues 1089-1115 (VQNSYNRTDSYDLGSNNSHSSITSDTN) are disordered. The 144-residue stretch at 1134–1277 (VVVFTDIISA…PTVTTAAAVT (144 aa)) folds into the Guanylate cyclase domain. Residues 1399 to 1651 (IKMGEQIGLG…DDVIIVLAKF (253 aa)) form the Protein kinase 2 domain. Residues 1405 to 1413 (IGLGSYGVV) and K1426 contribute to the ATP site. D1522 functions as the Proton acceptor in the catalytic mechanism.

Its subcellular location is the membrane. It carries out the reaction L-seryl-[protein] + ATP = O-phospho-L-seryl-[protein] + ADP + H(+). The enzyme catalyses L-threonyl-[protein] + ATP = O-phospho-L-threonyl-[protein] + ADP + H(+). The chain is Putative serine/threonine-protein kinase/receptor R826 from Acanthamoeba polyphaga mimivirus (APMV).